Reading from the N-terminus, the 419-residue chain is Tol-Pal system protein TolB (419 aa).

A signal peptide spans 1–19; the sequence is MFNRIISLFLLLFTGQVIA.

It belongs to the TolB family. In terms of assembly, the Tol-Pal system is composed of five core proteins: the inner membrane proteins TolA, TolQ and TolR, the periplasmic protein TolB and the outer membrane protein Pal. They form a network linking the inner and outer membranes and the peptidoglycan layer.

The protein resides in the periplasm. Functionally, part of the Tol-Pal system, which plays a role in outer membrane invagination during cell division and is important for maintaining outer membrane integrity. The chain is Tol-Pal system protein TolB from Legionella pneumophila subsp. pneumophila (strain Philadelphia 1 / ATCC 33152 / DSM 7513).